The primary structure comprises 334 residues: Anthranilate phosphoribosyltransferase (334 aa).

Residues G79, 82–83 (GD), S87, 89–92 (NIST), 107–115 (KAGNRSISS), and S119 contribute to the 5-phospho-alpha-D-ribose 1-diphosphate site. G79 provides a ligand contact to anthranilate. S91 provides a ligand contact to Mg(2+). N110 is an anthranilate binding site. Position 165 (R165) interacts with anthranilate. Residues D224 and E225 each contribute to the Mg(2+) site.

Belongs to the anthranilate phosphoribosyltransferase family. As to quaternary structure, homodimer. Mg(2+) serves as cofactor.

It catalyses the reaction N-(5-phospho-beta-D-ribosyl)anthranilate + diphosphate = 5-phospho-alpha-D-ribose 1-diphosphate + anthranilate. It participates in amino-acid biosynthesis; L-tryptophan biosynthesis; L-tryptophan from chorismate: step 2/5. In terms of biological role, catalyzes the transfer of the phosphoribosyl group of 5-phosphorylribose-1-pyrophosphate (PRPP) to anthranilate to yield N-(5'-phosphoribosyl)-anthranilate (PRA). The chain is Anthranilate phosphoribosyltransferase from Streptococcus thermophilus (strain ATCC BAA-250 / LMG 18311).